Here is a 134-residue protein sequence, read N- to C-terminus: Translation initiation factor 5A (134 aa).

Lysine 36 carries the hypusine modification.

It belongs to the eIF-5A family.

It is found in the cytoplasm. Functions by promoting the formation of the first peptide bond. The sequence is that of Translation initiation factor 5A (eIF5A) from Korarchaeum cryptofilum (strain OPF8).